Here is a 168-residue protein sequence, read N- to C-terminus: Oleosin 18.2 kDa (168 aa).

At Ala-2 the chain carries N-acetylalanine. The segment at 2 to 45 (AEVRDRNLPHQVQVHPQYRLDNTTGGGYGAKNYHSGPSTSQVLA) is polar. 3 helical membrane passes run 43-63 (VLAVLTLLPIGGTLLALAGLT), 76-96 (PLFIIFSPVLVPAAIAIAMAV), and 97-117 (TGFLSSGAFGLTGLSSLSYVL). Positions 46 to 117 (VLTLLPIGGT…TGLSSLSYVL (72 aa)) are hydrophobic.

It belongs to the oleosin family.

The protein localises to the lipid droplet. Its subcellular location is the membrane. Its function is as follows. May have a structural role to stabilize the lipid body during desiccation of the seed by preventing coalescence of the oil. Probably interacts with both lipid and phospholipid moieties of lipid bodies. May also provide recognition signals for specific lipase anchorage in lipolysis during seedling growth. The polypeptide is Oleosin 18.2 kDa (MATP6-A) (Gossypium hirsutum (Upland cotton)).